The sequence spans 1108 residues: Receptor-type guanylate cyclase gcy-20 (1108 aa).

An N-terminal signal peptide occupies residues 1–15 (MRILLLLLQNILVFC). Residues 16 to 474 (QFLQTIKVGL…ECPADFVKEY (459 aa)) are Extracellular-facing. N-linked (GlcNAc...) asparagine glycans are attached at residues N66, N131, N319, N341, N366, and N380. The helical transmembrane segment at 475–495 (LVYTIIAAFIVILALLAGCAG) threads the bilayer. Residues 483–803 (FIVILALLAG…IEQVRSHLNG (321 aa)) enclose the Protein kinase domain. ATP-binding positions include 489-497 (LLAGCAGLL) and K571. At 496 to 1108 (LLYTMHMKRK…QAGDNNSETV (613 aa)) the chain is on the cytoplasmic side. Residues 876–1006 (TIFFSDVVQF…DAVNTASRME (131 aa)) form the Guanylate cyclase domain. A disordered region spans residues 1083 to 1108 (LEKNAEGSETSSLSVDQAGDNNSETV). Polar residues predominate over residues 1089-1108 (GSETSSLSVDQAGDNNSETV).

This sequence belongs to the adenylyl cyclase class-4/guanylyl cyclase family. In terms of tissue distribution, expressed asymmetrically in ASE left (ASEL) sensory neuron. Expressed in excretory gland and canal cell.

It is found in the cell membrane. It carries out the reaction GTP = 3',5'-cyclic GMP + diphosphate. In terms of biological role, guanylate cyclase involved in the production of the second messenger cGMP. This is Receptor-type guanylate cyclase gcy-20 from Caenorhabditis elegans.